A 457-amino-acid polypeptide reads, in one-letter code: Multidrug resistance protein MdtK (457 aa).

The next 12 membrane-spanning stretches (helical) occupy residues 11 to 31, 53 to 73, 93 to 113, 127 to 147, 160 to 180, 189 to 209, 243 to 263, 276 to 296, 314 to 334, 350 to 370, 387 to 407, and 418 to 438; these read LLAL…MGFV, IWLP…PVIA, WLAG…GYII, AVGY…FQVA, GMVM…IFIY, GGVG…LAMV, LPIA…ALLV, IALN…AAVT, AART…IFTV, VVTL…SDSI, IFYI…YILA, and PAGF…MMML.

The protein belongs to the multi antimicrobial extrusion (MATE) (TC 2.A.66.1) family. MdtK subfamily.

The protein localises to the cell inner membrane. Its function is as follows. Multidrug efflux pump that functions probably as a Na(+)/drug antiporter. This chain is Multidrug resistance protein MdtK, found in Escherichia coli O17:K52:H18 (strain UMN026 / ExPEC).